The sequence spans 498 residues: 3-octaprenyl-4-hydroxybenzoate carboxy-lyase (498 aa).

Asn176 contributes to the Mn(2+) binding site. Residues 179–181 (IYR), 193–195 (RWL), and 198–199 (RG) contribute to the prenylated FMN site. Residue Glu242 coordinates Mn(2+). Asp291 functions as the Proton donor in the catalytic mechanism.

The protein belongs to the UbiD family. As to quaternary structure, homohexamer. Prenylated FMN serves as cofactor. The cofactor is Mn(2+).

The protein localises to the cell membrane. It carries out the reaction a 4-hydroxy-3-(all-trans-polyprenyl)benzoate + H(+) = a 2-(all-trans-polyprenyl)phenol + CO2. Its pathway is cofactor biosynthesis; ubiquinone biosynthesis. Its function is as follows. Catalyzes the decarboxylation of 3-octaprenyl-4-hydroxy benzoate to 2-octaprenylphenol, an intermediate step in ubiquinone biosynthesis. This is 3-octaprenyl-4-hydroxybenzoate carboxy-lyase from Escherichia coli O6:K15:H31 (strain 536 / UPEC).